We begin with the raw amino-acid sequence, 3423 residues long: Genome polyprotein (3423 aa).

The segment at 1-25 (MKNPKKKSGGFRIVNMLKRGVARVS) is disordered. Residues 1–104 (MKNPKKKSGG…INARKEKKRR (104 aa)) lie on the Cytoplasmic side of the membrane. Positions 37–72 (LLLGHGPIRMVLAILAFLRFTAIKPSLGLINRWGSV) are hydrophobic; homodimerization of capsid protein C. Positions 105-122 (GTDTSVGIVGLLLTTAMA) are cleaved as a propeptide — ER anchor for capsid protein C, removed in mature form by serine protease NS3. The chain crosses the membrane as a helical span at residues 105-125 (GTDTSVGIVGLLLTTAMAVEV). The Extracellular segment spans residues 126–249 (TRRGNAYYMY…YTKHLIRVEN (124 aa)). An N-linked (GlcNAc...) asparagine; by host glycan is attached at Asn192. Residues 250 to 269 (WIFRNPGFALAAAAIAWLLG) form a helical membrane-spanning segment. Over 270-274 (SSTSQ) the chain is Cytoplasmic. The chain crosses the membrane as a helical span at residues 275 to 290 (KVIYLVMILLIAPAYS). Topologically, residues 291-745 (IRCIGVSNRD…HQIFGAAFKS (455 aa)) are extracellular. Lys328 participates in a covalent cross-link: Glycyl lysine isopeptide (Lys-Gly) (interchain with G-Cter in ubiquitin). Intrachain disulfides connect Cys350–Cys406 and Cys382–Cys411. Positions 388 to 401 (DRGWGNGCGLFGKG) are fusion peptide. An N-linked (GlcNAc...) asparagine; by host glycan is attached at Asn444. Cystine bridges form between Cys480/Cys581 and Cys598/Cys629. Lys571 participates in a covalent cross-link: Glycyl lysine isopeptide (Lys-Gly) (interchain with G-Cter in ubiquitin). Residues 746 to 767 (LFGGMSWFSQILIGTLLVWLGL) form a helical membrane-spanning segment. Topologically, residues 768-773 (NTKNGS) are cytoplasmic. Residues 774 to 794 (ISLMCLALGGVLIFLSTAVSA) traverse the membrane as a helical segment. Topologically, residues 795-1177 (DVGCSVDFSK…EGLKKRMTTK (383 aa)) are lumenal. Intrachain disulfides connect Cys798/Cys809, Cys849/Cys937, Cys973/Cys1017, Cys1074/Cys1123, Cys1085/Cys1106, and Cys1107/Cys1110. N-linked (GlcNAc...) asparagine; by host glycosylation is found at Asn924 and Asn1001. The helical transmembrane segment at 1178–1198 (IIISTSMAVLVAMILGGFSMS) threads the bilayer. Residues 1199–1220 (DLAKLAILMGATFAEMNTGGDV) lie on the Cytoplasmic side of the membrane. Residues 1221–1241 (AHLALIAAFKVRPALLVSFIF) traverse the membrane as a helical segment. Topologically, residues 1242-1270 (RANWTPRESMLLALASCLLQTAISALEGD) are lumenal. The helical transmembrane segment at 1271–1291 (LMVPINGFALAWLAIRAMVVP) threads the bilayer. The Cytoplasmic portion of the chain corresponds to 1292–1295 (RTDN). A helical transmembrane segment spans residues 1296–1316 (ITLAILAALTPLARGTLLVAW). Over 1317 to 1345 (RAGLATCGGFMLLSLKGKGSVKKNLPFVM) the chain is Lumenal. A helical membrane pass occupies residues 1346–1366 (ALGLTAVRLVDPINVVGLLLL). Residues 1367-1373 (TRSGKRS) lie on the Cytoplasmic side of the membrane. The chain crosses the membrane as a helical span at residues 1374–1394 (WPPSEVLTAVGLICALAGGFA). At 1395–1397 (KAD) the chain is on the lumenal side. A helical membrane pass occupies residues 1398–1418 (IEMAGPMAAVGLLIVSYVVSG). At 1419-1472 (KSVDMYIERAGDITWEKDAEVTGNSPRLDVALDESGDFSLVEDDGPPMREIILK) the chain is on the cytoplasmic side. Positions 1425–1464 (IERAGDITWEKDAEVTGNSPRLDVALDESGDFSLVEDDGP) are interacts with and activates NS3 protease. The segment at 1429 to 1451 (GDITWEKDAEVTGNSPRLDVALD) is disordered. Residues 1473 to 1493 (VVLMAICGMNPIAIPFAAGAW) constitute an intramembrane region (helical). Over 1494-2170 (YVYVKTGKRS…KAAAAQLPET (677 aa)) the chain is Lumenal. One can recognise a Peptidase S7 domain in the interval 1503–1680 (SGALWDVPAP…RREEETPVEC (178 aa)). Residues His1553, Asp1577, and Ser1637 each act as charge relay system; for serine protease NS3 activity in the active site. Positions 1683–1839 (PSMLKKKQLT…DSNSPIMDTE (157 aa)) constitute a Helicase ATP-binding domain. The tract at residues 1687–1690 (KKKQ) is important for RNA-binding. Position 1696-1703 (1696-1703 (LHPGAGKT)) interacts with ATP. The DEAH box motif lies at 1787-1790 (DEAH). A Helicase C-terminal domain is found at 1834–2013 (PIMDTEVEVP…GLIASLYRPE (180 aa)). Residue Lys1891 is modified to N6-acetyllysine; by host. Residues 2171-2191 (LETIMLLGLLGTVSLGIFFVL) traverse the membrane as a helical segment. Residues 2192–2195 (MRNK) lie on the Lumenal side of the membrane. The helical intramembrane region spans 2196–2216 (GIGKMGFGMVTLGASAWLMWL). The Cytoplasmic segment spans residues 2217 to 2218 (SE). Residues 2219–2239 (IEPARIACVLIVVFLLLVVLI) form a helical membrane-spanning segment. At 2240 to 2254 (PEPEKQRSPQDNQMA) the chain is on the lumenal side. Positions 2255–2269 (IIIMVAVGLLGLITA) form an intramembrane region, helical. Topologically, residues 2270–2307 (NELGWLERTKSDLSHLMGRREEGATIGFSMDIDLRPAS) are lumenal. An intramembrane region (helical) is located at residues 2308–2328 (AWAIYAALTTFITPAVQHAVT). The Lumenal segment spans residues 2329 to 2344 (TSYNNYSLMAMATQAG). A helical membrane pass occupies residues 2345–2365 (VLFGMGKGMPFYAWDFGVPLL). At 2366 to 2375 (MIGCYSQLTP) the chain is on the cytoplasmic side. A helical membrane pass occupies residues 2376–2396 (LTLIVAIILLVAHYMYLIPGL). Residues 2397 to 2441 (QAAAARAAQKRTAAGIMKNPVVDGIVVTDIDTMTIDPQVEKKMGQ) are Lumenal-facing. A helical membrane pass occupies residues 2442 to 2462 (VLLIAVAVSSAILSRTAWGWG). Residues 2463 to 3423 (EAGALITAAT…GEEGSTPGVL (961 aa)) are Cytoplasmic-facing. The 265-residue stretch at 2521-2785 (GGGTGETLGE…DVNLGSGTRA (265 aa)) folds into the mRNA cap 0-1 NS5-type MT domain. 2533 to 2539 (KARLNQM) is a GTP binding site. Ser2576 lines the S-adenosyl-L-methionine pocket. Ser2576 carries the phosphoserine modification. Lys2581 serves as the catalytic For 2'-O-MTase activity. The SUMO-interacting motif (SIM) stretch occupies residues 2597 to 2600 (VIDL). Residues Gly2606, Trp2607, Thr2624, Lys2625, His2630, Glu2631, Asp2651, Val2652, Asp2666, and Ile2667 each contribute to the S-adenosyl-L-methionine site. Asp2666 functions as the For 2'-O-MTase activity in the catalytic mechanism. Position 2669–2675 (2669–2675 (ESSSSPE)) interacts with GTP. The active-site For 2'-O-MTase activity is Lys2702. Residue 2733–2735 (RNS) participates in GTP binding. Glu2738 functions as the For 2'-O-MTase activity in the catalytic mechanism. Tyr2740 provides a ligand contact to S-adenosyl-L-methionine. Residues 2908-2914 (KHKRPRV) carry the Nuclear localization signal (NLS) motif. Glu2959, His2963, Cys2968, and Cys2971 together coordinate Zn(2+). Residues 3049–3199 (GRMYADDTAG…KPIDDRFAHA (151 aa)) enclose the RdRp catalytic domain. Residues His3234, Cys3250, and Cys3369 each coordinate Zn(2+).

This sequence in the N-terminal section; belongs to the class I-like SAM-binding methyltransferase superfamily. mRNA cap 0-1 NS5-type methyltransferase family. As to quaternary structure, homodimer. Interacts with host SERTAD3; this interaction promotes capsid protein C degradation. Interacts with host CAPRIN1; this interaction is probably linked to the inhibition of stress granules formation by the virus. Interacts with host G3BP1; this interaction is probably linked to the inhibition of stress granules formation by the virus. Forms heterodimers with envelope protein E in the endoplasmic reticulum and Golgi. Interacts with non-structural protein 2A. In terms of assembly, homodimer; in the endoplasmic reticulum and Golgi. Interacts with host TYRO3, AXL and DC-SIGN proteins. Interacts with non-structural protein 2A. Interacts with host HAVCR1; this interaction likely mediates virus attachment to host cell. Interacts with host NCAM1. Interacts with host HSPA5. Interacts with Aedes aegypti SRPN25, APY and venom allergen-1 salivary proteins; the interactions do not affect Zika virus replication in human endothelial cells and keratinocytes. As to quaternary structure, homodimer; Homohexamer when secreted. Interacts with host TBK1. Interacts with host USP8. Interacts with envelope protein E. Interacts with the structural protein prM/E complex, and the NS2B/NS3 protease complex. In terms of assembly, forms a heterodimer with serine protease NS3. May form homooligomers. Interacts with human SPCS1. Interacts with non-structural protein 2A. As to quaternary structure, forms a heterodimer with NS2B. Interacts with NS4B. Interacts with unphosphorylated RNA-directed RNA polymerase NS5; this interaction stimulates RNA-directed RNA polymerase NS5 guanylyltransferase activity. Interacts with non-structural protein 2A. Interacts with host SHFL; this interaction promotes NS3 degradation via a lysosome-dependent pathway. Interacts with host CEP63; this interaction disorganizes the centrosome and inhibits host innate immune response. May interact with host ANKLE2; the interaction may cause defects in brain development, such as microcephaly. May interact with host SRPRA and SEC61G. In terms of assembly, interacts with serine protease NS3. Interacts with NS1. As to quaternary structure, homodimer. Interacts with host STAT2; this interaction inhibits the phosphorylation of the latter, and, when all viral proteins are present (polyprotein), targets STAT2 for degradation. Interacts with host TBK1 and IKBKE; these interactions lead to the inhibition of the host RIG-I signaling pathway. Interacts with host PAF1 complex; the interaction may prevent the recruitment of the host PAF1 complex to interferon-responsive genes, and thus reduces the immune response. Interacts with serine protease NS3. Interacts with host KPNA2. Interacts with host ZSWIM8; this interaction allows STAT2 binding to ZSWIM8 and subsequent proteasomal degradation leading to inhibition of interferon signaling. Specific enzymatic cleavages in vivo yield mature proteins. Cleavages in the lumen of endoplasmic reticulum are performed by host signal peptidase, whereas cleavages in the cytoplasmic side are performed by serine protease NS3. Signal cleavage at the 2K-4B site requires a prior NS3 protease-mediated cleavage at the 4A-2K site. In terms of processing, cleaved in post-Golgi vesicles by a host furin, releasing the mature small envelope protein M, and peptide pr. This cleavage is incomplete as up to 30% of viral particles still carry uncleaved prM. Post-translationally, N-glycosylation plays a role in virulence in mammalian and mosquito hosts, but may have no effect on neurovirulence. Ubiquitination by host TRIM7 promotes virus attachment and fusion of the virus and the host endosome membrane. In terms of processing, N-glycosylated. The excreted form is glycosylated, which is required for efficient secretion of the protein from infected cells. Post-translationally, ubiquitination by host TRIM22 leads to proteasomal degradation. Acetylated by host KAT5. Acetylation modulates NS3 RNA-binding and unwinding activities and plays an important positive role for viral replication. In terms of processing, phosphorylated on serines residues. This phosphorylation may trigger NS5 nuclear localization. Post-translationally, sumoylated, required for regulating IFN induced interferon stimulated genes/ISGs.

Its subcellular location is the virion. The protein localises to the host nucleus. It is found in the host cytoplasm. The protein resides in the host perinuclear region. It localises to the secreted. Its subcellular location is the virion membrane. The protein localises to the host endoplasmic reticulum membrane. It is found in the host cell surface. The enzyme catalyses a 5'-end (5'-triphosphoguanosine)-ribonucleoside in mRNA + S-adenosyl-L-methionine = a 5'-end (N(7)-methyl 5'-triphosphoguanosine)-ribonucleoside in mRNA + S-adenosyl-L-homocysteine. It catalyses the reaction a 5'-end (N(7)-methyl 5'-triphosphoguanosine)-ribonucleoside in mRNA + S-adenosyl-L-methionine = a 5'-end (N(7)-methyl 5'-triphosphoguanosine)-(2'-O-methyl-ribonucleoside) in mRNA + S-adenosyl-L-homocysteine + H(+). The catalysed reaction is RNA(n) + a ribonucleoside 5'-triphosphate = RNA(n+1) + diphosphate. It carries out the reaction Selective hydrolysis of -Xaa-Xaa-|-Yaa- bonds in which each of the Xaa can be either Arg or Lys and Yaa can be either Ser or Ala.. The enzyme catalyses a ribonucleoside 5'-triphosphate + H2O = a ribonucleoside 5'-diphosphate + phosphate + H(+). It catalyses the reaction ATP + H2O = ADP + phosphate + H(+). Functionally, plays a role in virus budding by binding to the cell membrane and gathering the viral RNA into a nucleocapsid that forms the core of the mature virus particle. During virus entry, may induce genome penetration into the host cytoplasm after hemifusion induced by the surface proteins. Can migrate to the cell nucleus where it modulates host functions. Inhibits the integrated stress response (ISR) in the infected cell. In terms of biological role, inhibits RNA silencing by interfering with host Dicer. Its function is as follows. Prevents premature fusion activity of envelope proteins in trans-Golgi by binding to envelope protein E at pH 6.0. After virion release in extracellular space, gets dissociated from E dimers. Plays a role in host immune defense modulation and protection of envelope protein E during virion synthesis. PrM-E cleavage is inefficient, many virions are only partially matured and immature prM-E proteins could play a role in immune evasion. Contributes to fetal microcephaly in humans. Acts as a chaperone for envelope protein E during intracellular virion assembly by masking and inactivating envelope protein E fusion peptide. prM is the only viral peptide matured by host furin in the trans-Golgi network probably to avoid catastrophic activation of the viral fusion activity in acidic Golgi compartment prior to virion release. Functionally, may play a role in virus budding. Exerts cytotoxic effects by activating a mitochondrial apoptotic pathway through M ectodomain. May display a viroporin activity. In terms of biological role, binds to host cell surface receptors and mediates fusion between viral and cellular membranes. Efficient virus attachment to cell is, at least in part, mediated by host HAVCR1 in a cell-type specific manner. In addition, host NCAM1 can also be used as entry receptor. Interaction with host HSPA5 plays an important role in the early stages of infection as well. Envelope protein is synthesized in the endoplasmic reticulum and forms a heterodimer with protein prM. The heterodimer plays a role in virion budding in the ER, and the newly formed immature particle is covered with 60 spikes composed of heterodimers between precursor prM and envelope protein E. The virion is transported to the Golgi apparatus where the low pH causes the dissociation of PrM-E heterodimers and formation of E homodimers. PrM-E cleavage is inefficient, many virions are only partially matured and immature prM-E proteins could play a role in immune evasion. Its function is as follows. Plays a role in the inhibition of host RLR-induced interferon-beta activation by targeting TANK-binding kinase 1/TBK1. In addition, recruits the host deubiquitinase USP8 to cleave 'Lys-11'-linked polyubiquitin chains from caspase-1/CASP1 thus inhibiting its proteasomal degradation. In turn, stabilized CASP1 promotes cleavage of cGAS, which inhibits its ability to recognize mitochondrial DNA release and initiate type I interferon signaling. Component of the viral RNA replication complex that recruits genomic RNA, the structural protein prM/E complex, and the NS2B/NS3 protease complex to the virion assembly site and orchestrates virus morphogenesis. Also antagonizes the host alpha/beta interferon antiviral response. May disrupt adherens junction formation and thereby impair proliferation of radial cells in the host cortex. Functionally, required cofactor for the serine protease function of NS3. In terms of biological role, displays three enzymatic activities: serine protease, NTPase and RNA helicase. NS3 serine protease, in association with NS2B, performs its autocleavage and cleaves the polyprotein at dibasic sites in the cytoplasm: C-prM, NS2A-NS2B, NS2B-NS3, NS3-NS4A, NS4A-2K and NS4B-NS5. NS3 RNA helicase binds RNA and unwinds dsRNA in the 3' to 5' direction. Leads to translation arrest when expressed ex vivo. Disrupts host centrosome organization in a CEP63-dependent manner to degrade host TBK1 and inhibits innate immune response. Inhibits the integrated stress response (ISR) in the infected cell. Its function is as follows. Regulates the ATPase activity of the NS3 helicase activity. NS4A allows NS3 helicase to conserve energy during unwinding. Cooperatively with NS4B suppresses the Akt-mTOR pathway and leads to cellular dysregulation. By inhibiting host ANKLE2 functions, may cause defects in brain development, such as microcephaly. Also antagonizes the host MDA5-mediated induction of alpha/beta interferon antiviral response. Leads to translation arrest when expressed ex vivo. Inhibits the integrated stress response (ISR) in the infected cell. Functions as a signal peptide for NS4B and is required for the interferon antagonism activity of the latter. Functionally, induces the formation of ER-derived membrane vesicles where the viral replication takes place. Also plays a role in the inhibition of host RLR-induced interferon-beta production at TANK-binding kinase 1/TBK1 level. Cooperatively with NS4A suppresses the Akt-mTOR pathway and leads to cellular dysregulation. In terms of biological role, replicates the viral (+) and (-) RNA genome, and performs the capping of genomes in the cytoplasm. Methylates viral RNA cap at guanine N-7 and ribose 2'-O positions. Once sufficient NS5 is expressed, binds to the cap-proximal structure and inhibits further translation of the viral genome. Besides its role in RNA genome replication, also prevents the establishment of a cellular antiviral state by blocking the interferon-alpha/beta (IFN-alpha/beta) signaling pathway. Mechanistically, interferes with host kinases TBK1 and IKKE upstream of interferon regulatory factor 3/IRF3 to inhibit the RIG-I pathway. Also antagonizes type I interferon signaling by targeting STAT2 for degradation by the proteasome thereby preventing activation of JAK-STAT signaling pathway. Mechanistically, acts as a scaffold protein to connect host ZSWIM8/CUL3 ligase complex and STAT2, leading to STAT2 degradation. Within the host nucleus, disrupts host SUMO1 and STAT2 co-localization with PML, resulting in PML degradation. May also reduce immune responses by preventing the recruitment of the host PAF1 complex to interferon-responsive genes. In Zika virus (isolate ZIKV/Human/Cambodia/FSS13025/2010) (ZIKV), this protein is Genome polyprotein.